Consider the following 213-residue polypeptide: Serine acetyltransferase (213 aa).

Belongs to the transferase hexapeptide repeat family.

The protein resides in the cytoplasm. It catalyses the reaction L-serine + acetyl-CoA = O-acetyl-L-serine + CoA. The protein operates within amino-acid biosynthesis; L-cysteine biosynthesis; L-cysteine from L-serine: step 1/2. This chain is Serine acetyltransferase (cysE), found in Staphylococcus epidermidis (strain ATCC 35984 / DSM 28319 / BCRC 17069 / CCUG 31568 / BM 3577 / RP62A).